Here is a 142-residue protein sequence, read N- to C-terminus: MGIHEHVEGIKAHWAKNFSFLDYFKKVYGRDKPLPKWTDADVDEFIASDPVYGPQLKAMRESRKFALGGALVGGAHLGGIALKYSKAPHGVVLATGFGAICGAVVGSEVAEHWYQLYKTDKQGANLRFIYWWEDKVAGNQKS.

As to quaternary structure, component of complex II composed of eight subunits in plants: four classical SDH subunits SDH1, SDH2, SDH3 and SDH4 (a flavoprotein (FP), an iron-sulfur protein (IP), and a cytochrome b composed of a large and a small subunit.), as well as four subunits unknown in mitochondria from bacteria and heterotrophic eukaryotes.

The protein localises to the mitochondrion inner membrane. It functions in the pathway carbohydrate metabolism; tricarboxylic acid cycle. The sequence is that of Succinate dehydrogenase subunit 6, mitochondrial from Oryza sativa subsp. japonica (Rice).